The sequence spans 166 residues: Myeloid-derived growth factor (166 aa).

The N-terminal stretch at 1-24 (MAAPSGGFWTAVVLAAAALKLAAA) is a signal peptide.

Belongs to the MYDGF family. As to expression, expressed in prostate, spleen and lung, and weakly expressed in the left ventricle (LF) and liver. Expressed predominantly in inflammatory cells, such as monocytes and macrophages, and weakly expressed in neutrophils, T-cells, B-cells, endothelial cells and cardiac myocytes, after myocardial infarction (MI) (at protein level).

The protein resides in the secreted. Its subcellular location is the endoplasmic reticulum-Golgi intermediate compartment. It localises to the endoplasmic reticulum. It is found in the golgi apparatus. In terms of biological role, bone marrow-derived monocyte and paracrine-acting protein that promotes cardiac myocyte survival and adaptive angiogenesis for cardiac protection and/or repair after myocardial infarction (MI). Stimulates endothelial cell proliferation through a MAPK1/3-, STAT3- and CCND1-mediated signaling pathway. Inhibits cardiac myocyte apoptosis in a PI3K/AKT-dependent signaling pathway. The chain is Myeloid-derived growth factor from Mus musculus (Mouse).